The primary structure comprises 105 residues: Large ribosomal subunit protein uL24 (105 aa).

The protein belongs to the universal ribosomal protein uL24 family. In terms of assembly, part of the 50S ribosomal subunit.

In terms of biological role, one of two assembly initiator proteins, it binds directly to the 5'-end of the 23S rRNA, where it nucleates assembly of the 50S subunit. Functionally, one of the proteins that surrounds the polypeptide exit tunnel on the outside of the subunit. The polypeptide is Large ribosomal subunit protein uL24 (Azoarcus sp. (strain BH72)).